The primary structure comprises 839 residues: Probable alpha-glucuronidase A (839 aa).

The N-terminal stretch at 1 to 18 is a signal peptide; it reads MRWSFLTVLLWLVSLTGA. Residues Asn49, Asn101, Asn148, Asn221, Asn278, Asn309, Asn342, Asn464, Asn526, Asn575, Asn681, and Asn731 are each glycosylated (N-linked (GlcNAc...) asparagine).

Belongs to the glycosyl hydrolase 67 family.

The protein localises to the secreted. The enzyme catalyses an alpha-D-glucuronoside + H2O = D-glucuronate + an alcohol. Alpha-glucuronidase involved in the hydrolysis of xylan, a major structural heterogeneous polysaccharide found in plant biomass representing the second most abundant polysaccharide in the biosphere, after cellulose. Releases 4-O-methylglucuronic acid from xylan. This chain is Probable alpha-glucuronidase A (aguA), found in Aspergillus flavus (strain ATCC 200026 / FGSC A1120 / IAM 13836 / NRRL 3357 / JCM 12722 / SRRC 167).